Here is a 199-residue protein sequence, read N- to C-terminus: Recombination protein RecR (199 aa).

The C4-type zinc finger occupies 58 to 73; that stretch reads CKICFNITDKEVCDIC. Positions 81 to 176 constitute a Toprim domain; sequence STICVVSHPM…KVTRIAHGIP (96 aa).

Belongs to the RecR family.

In terms of biological role, may play a role in DNA repair. It seems to be involved in an RecBC-independent recombinational process of DNA repair. It may act with RecF and RecO. The polypeptide is Recombination protein RecR (Caldanaerobacter subterraneus subsp. tengcongensis (strain DSM 15242 / JCM 11007 / NBRC 100824 / MB4) (Thermoanaerobacter tengcongensis)).